We begin with the raw amino-acid sequence, 71 residues long: Large ribosomal subunit protein bL31 (71 aa).

Belongs to the bacterial ribosomal protein bL31 family. Type A subfamily. In terms of assembly, part of the 50S ribosomal subunit.

In terms of biological role, binds the 23S rRNA. This chain is Large ribosomal subunit protein bL31 (rpmE), found in Mycoplasmopsis synoviae (strain 53) (Mycoplasma synoviae).